The following is a 250-amino-acid chain: uncharacterized protein (250 aa).

Residues 1–17 (MRTLVLLSSVAILSTLA) form the signal peptide. N-linked (GlcNAc...) asparagine glycans are attached at residues Asn48, Asn159, Asn223, and Asn239.

Its subcellular location is the secreted. This is an uncharacterized protein from Caenorhabditis elegans.